A 156-amino-acid polypeptide reads, in one-letter code: Deoxyuridine 5'-triphosphate nucleotidohydrolase (156 aa).

Belongs to the dCTP deaminase family. Archaeal dUTPase subfamily. In terms of assembly, homotrimer.

The enzyme catalyses dUTP + H2O = dUMP + diphosphate + H(+). It functions in the pathway pyrimidine metabolism; dUMP biosynthesis; dUMP from dCTP (dUTP route): step 2/2. In terms of biological role, this enzyme is involved in nucleotide metabolism: it produces dUMP, the immediate precursor of thymidine nucleotides and it decreases the intracellular concentration of dUTP so that uracil cannot be incorporated into DNA. The polypeptide is Deoxyuridine 5'-triphosphate nucleotidohydrolase (Methanocaldococcus jannaschii (strain ATCC 43067 / DSM 2661 / JAL-1 / JCM 10045 / NBRC 100440) (Methanococcus jannaschii)).